The primary structure comprises 1291 residues: MEIQQTHRKINRPLVSLALVGALVSITPQQSHAAFFTTVIIPAIVGGIATGAAVGTVSGLLGWGLKQAEEANKTPDKPDKVWRIQAGKGFNEFPNKEYDLYKSLLSSKIDGGWDWGNAARHYWVKDGQWNKLEVDMQNAVGTYNLSGLINFTGGDLDVNMQKATLRLGQFNGNSFTSYKDSADRTTRVDFNAKNILIDNFLEINNRVGSGAGRKASSTVLTLQASEGITSRENAEISLYDGATLNLASNSVKLMGNVWMGRLQYVGAYLAPSYSTINTSKVTGEVNFNHLTVGDHNAAQAGIIASNKTHIGTLDLWQSAGLNIIAPPEGGYKDKPNDKPSNTTQNNAKNDKQESSQNNSNTQVINPPNSAQKTEIQPTQVIDGPFAGGKNTVVNINRINTNADGTIRVGGFKASLTTNAAHLHIGKGGINLSNQASGRSLLVENLTGNITVDGPLRVNNQVGGYALAGSSANFEFKAGTDTKNGTATFNNDISLGRFVNLKVDAHTANFKGIDTGNGGFNTLDFSGVTNKVNINKLITASTNVAVKNFNINELVVKTNGVSVGEYTHFSEDIGSQSRINTVRLETGTRSIYSGGVKFKGGEKLVINDFYYAPWNYFDARNIKNVEITNKLAFGPQGSPWGTAKLMFNNLTLGQNAVMDYSQFSNLTIQGDFVNNQGTINYLVRGGQVATLNVGNAAAMFFSNNVDSATGFYQPLMKINSAQDLIKNKEHVLLKAKIIGYGNVSAGTDSIANVNLIEQFKERLALYNNNNRMDICVVRNTDDIKACGTAIGNQSMVNNPENYKYLEGKAWKNIGISKTANGSKISVHYLGNSTPTENGGNTTNLPTNTTNKVRFASYALIKNAPFARYSATPNLVAINQHDFGTIESVFELANRSNDIDTLYANSGAQGRDLLQTLLIDSHDAGYARTMIDATSANEITKQLNTATTTLNNIASLEHKTSGLQTLSLSNAMILNSRLVNLSRRHTNHIDSFAKRLQALKDQRFASLESAAEVLYQFAPKYEKPTNVWANAIGGTSLNSGGNASLYGTSAGVDAYLNGEVEAIVGGFGSYGYSSFSNQANSLNSGANNTNFGVYSRIFANQHEFDFEAQGALGSDQSSLNFKSALLRDLNQSYNYLAYSAATRASYGYDFAFFRNALVLKPSVGVSYNHLGSTNFKSNSNQKVALKNGASSQHLFNASANVEARYYYGDTSYFYMNAGVLQEFANFGSSNAVSLNTFKVNATRNPLNTHARVMMGGELKLAKEVFLNLGFVYLHNLISNIGHFASNLGMRYSF.

A signal peptide spans 1–33 (MEIQQTHRKINRPLVSLALVGALVSITPQQSHA). The disordered stretch occupies residues 326 to 374 (PPEGGYKDKPNDKPSNTTQNNAKNDKQESSQNNSNTQVINPPNSAQKTE). Polar residues-rich tracts occupy residues 338-347 (KPSNTTQNNA) and 354-374 (SSQN…QKTE). The Autotransporter domain maps to 1018 to 1291 (KYEKPTNVWA…ASNLGMRYSF (274 aa)).

The protein localises to the periplasm. It is found in the secreted. It localises to the cell surface. Its subcellular location is the cell outer membrane. In terms of biological role, induces vacuolation of eukaryotic cells. Causes ulceration and gastric lesions. The chain is Vacuolating cytotoxin autotransporter (vacA) from Helicobacter pylori (Campylobacter pylori).